We begin with the raw amino-acid sequence, 289 residues long: D-alanine aminotransferase (289 aa).

Tyrosine 31 lines the substrate pocket. Arginine 50 serves as a coordination point for pyridoxal 5'-phosphate. Substrate is bound by residues arginine 99 and histidine 101. Residue lysine 147 is the Proton acceptor of the active site. Lysine 147 is modified (N6-(pyridoxal phosphate)lysine). Glutamate 179 is a pyridoxal 5'-phosphate binding site.

This sequence belongs to the class-IV pyridoxal-phosphate-dependent aminotransferase family. In terms of assembly, homodimer. The cofactor is pyridoxal 5'-phosphate.

The catalysed reaction is D-alanine + 2-oxoglutarate = D-glutamate + pyruvate. Its function is as follows. Acts on the D-isomers of alanine, leucine, aspartate, glutamate, aminobutyrate, norvaline and asparagine. The enzyme transfers an amino group from a substrate D-amino acid to the pyridoxal phosphate cofactor to form pyridoxamine and an alpha-keto acid in the first half-reaction. The second half-reaction is the reverse of the first, transferring the amino group from the pyridoxamine to a second alpha-keto acid to form the product D-amino acid via a ping-pong mechanism. This is an important process in the formation of D-alanine and D-glutamate, which are essential bacterial cell wall components. This is D-alanine aminotransferase (dat) from Listeria innocua serovar 6a (strain ATCC BAA-680 / CLIP 11262).